Reading from the N-terminus, the 340-residue chain is Probable cyclic nucleotide phosphodiesterase PsycPRwf_0181 (340 aa).

Residues 1–36 are disordered; that stretch reads MAPLPHSVSPRHTQVADNGRLSEPTDYHPPTEISTD. Fe cation contacts are provided by Asp47, His49, Asp128, Asn158, His237, His276, and His278. AMP contacts are provided by residues His49, Asp128, and 158-159; that span reads NH. Position 278 (His278) interacts with AMP.

Belongs to the cyclic nucleotide phosphodiesterase class-III family. Fe(2+) serves as cofactor.

The protein is Probable cyclic nucleotide phosphodiesterase PsycPRwf_0181 of Psychrobacter sp. (strain PRwf-1).